The following is a 215-amino-acid chain: Redox-sensing transcriptional repressor Rex (215 aa).

A DNA-binding region (H-T-H motif) is located at residues 18-57 (LYYRFLKNLHASGKQRVSSAELSDAVKVDSATIRRDFSYF). 92–97 (GVGNLG) provides a ligand contact to NAD(+).

Belongs to the transcriptional regulatory Rex family. In terms of assembly, homodimer.

It localises to the cytoplasm. Functionally, modulates transcription in response to changes in cellular NADH/NAD(+) redox state. In Bacillus licheniformis (strain ATCC 14580 / DSM 13 / JCM 2505 / CCUG 7422 / NBRC 12200 / NCIMB 9375 / NCTC 10341 / NRRL NRS-1264 / Gibson 46), this protein is Redox-sensing transcriptional repressor Rex.